Consider the following 247-residue polypeptide: STING ER exit protein (247 aa).

Phosphoserine is present on S127. A coiled-coil region spans residues 195-216 (EAREIADSYANNARIIEKQLQR). The disordered stretch occupies residues 215-247 (QRKGGKLSDVGIKTKTEDAPPPQKKQRGTLLER).

The protein belongs to the STEEP1 family.

Functionally, molecular adapter that stimulates membrane curvature formation and subsequent endoplasmic reticulum exit site (ERES) establishment by recruiting PI3K complex I, leading to COPII vesicle-mediated transport. The protein is STING ER exit protein of Drosophila melanogaster (Fruit fly).